Here is a 585-residue protein sequence, read N- to C-terminus: Pyruvate kinase (585 aa).

Arginine 32 provides a ligand contact to substrate. Asparagine 34, serine 36, aspartate 66, and threonine 67 together coordinate K(+). Asparagine 34–histidine 37 lines the ATP pocket. ATP is bound by residues arginine 73 and lysine 156. Glutamate 221 contributes to the Mg(2+) binding site. Residues glycine 244, aspartate 245, and threonine 277 each contribute to the substrate site. Aspartate 245 provides a ligand contact to Mg(2+).

It belongs to the pyruvate kinase family. The protein in the C-terminal section; belongs to the PEP-utilizing enzyme family. Mg(2+) serves as cofactor. K(+) is required as a cofactor.

The enzyme catalyses pyruvate + ATP = phosphoenolpyruvate + ADP + H(+). It participates in carbohydrate degradation; glycolysis; pyruvate from D-glyceraldehyde 3-phosphate: step 5/5. In Staphylococcus aureus (strain MRSA252), this protein is Pyruvate kinase (pyk).